We begin with the raw amino-acid sequence, 202 residues long: Recoverin (202 aa).

A lipid anchor (N-myristoyl glycine) is attached at Gly-2. Position 39 is a cysteine sulfenic acid (-SOH) (Cys-39). EF-hand domains follow at residues 41–59, 61–96, 97–132, and 147–182; these read SGRI…FFPE, DPKA…TSAG, KTNQ…IFKM, and TPEK…NKEI. Ca(2+)-binding residues include Asp-74, Asn-76, Asp-78, Thr-80, Glu-85, Asp-110, Asp-112, Asn-114, and Glu-121. An interaction with GRK1 region spans residues 189 to 192; sequence EPRK.

It belongs to the recoverin family. Homodimer; disulfide-linked. Homodimerization is caused by prolonged intense illumination. May form a complex composed of RHO, GRK1 and RCVRN in a Ca(2+)-dependent manner; RCVRN prevents the interaction between GRK1 and RHO. Interacts (via C-terminus) with GRK1 (via N-terminus); the interaction is Ca(2+)-dependent. The N-terminal glycine is linked to one of four different types of acyl groups. The most abundant is myristoleate (14:1), but 14:0, 14:2, and 12:0 acyl residues are also present. The Ca(2+) induced exposure of the myristoyl group, known as the calcium-myristoyl switch, promotes RCVRN binding to the photoreceptor cell membranes only when intracellular Ca(2+) concentration is high. Post-translationally, oxidation on Cys-39 occurs in response to prolonged intense illumination and results in the formation of disulfide homodimers, and to a lesser extent disulfide-linked heterodimers.

The protein localises to the photoreceptor inner segment. The protein resides in the cell projection. It localises to the cilium. It is found in the photoreceptor outer segment. Its subcellular location is the photoreceptor outer segment membrane. The protein localises to the perikaryon. Functionally, acts as a calcium sensor and regulates phototransduction of cone and rod photoreceptor cells. Modulates light sensitivity of cone photoreceptor in dark and dim conditions. In response to high Ca(2+) levels induced by low light levels, prolongs RHO/rhodopsin activation in rod photoreceptor cells by binding to and inhibiting GRK1-mediated phosphorylation of RHO/rhodopsin. Plays a role in scotopic vision/enhances vision in dim light by enhancing signal transfer between rod photoreceptors and rod bipolar cells. Improves rod photoreceptor sensitivity in dim light and mediates response of rod photoreceptors to facilitate detection of change and motion in bright light. The polypeptide is Recoverin (RCVRN) (Canis lupus familiaris (Dog)).